We begin with the raw amino-acid sequence, 436 residues long: Xylose isomerase (436 aa).

Catalysis depends on residues H100 and D103. The Mg(2+) site is built by E231, E267, H270, D295, D306, D308, and D338.

This sequence belongs to the xylose isomerase family. In terms of assembly, homotetramer. Mg(2+) is required as a cofactor.

It is found in the cytoplasm. The enzyme catalyses alpha-D-xylose = alpha-D-xylulofuranose. The protein is Xylose isomerase of Rhizobium etli (strain CIAT 652).